The primary structure comprises 364 residues: Aminomethyltransferase (364 aa).

It belongs to the GcvT family. As to quaternary structure, the glycine cleavage system is composed of four proteins: P, T, L and H.

It carries out the reaction N(6)-[(R)-S(8)-aminomethyldihydrolipoyl]-L-lysyl-[protein] + (6S)-5,6,7,8-tetrahydrofolate = N(6)-[(R)-dihydrolipoyl]-L-lysyl-[protein] + (6R)-5,10-methylene-5,6,7,8-tetrahydrofolate + NH4(+). In terms of biological role, the glycine cleavage system catalyzes the degradation of glycine. This Shewanella baltica (strain OS195) protein is Aminomethyltransferase.